Here is a 78-residue protein sequence, read N- to C-terminus: Neurogranin (78 aa).

Methionine 1 bears the N-acetylmethionine mark. Cysteine 3 and cysteine 51 are disulfide-bonded. The IQ domain maps to 26 to 47 (ANAAAAKIQASFRGHMARKKIK). Phosphoserine; by PHK and PKC is present on serine 36. The interval 39 to 78 (GHMARKKIKSGECGRKGPGPGGPGGAGGARGGAGGGPSGD) is disordered. The Collagen-like domain maps to 48-78 (SGECGRKGPGPGGPGGAGGARGGAGGGPSGD). The span at 54–78 (KGPGPGGPGGAGGARGGAGGGPSGD) shows a compositional bias: gly residues. Arginine 68 carries the citrulline; partial modification. An Omega-N-methylarginine modification is found at arginine 68.

This sequence belongs to the neurogranin family. Interacts with apo-calmodulin; this interaction decreases the affinity of calmodulin for calcium ions. In terms of processing, disulfide bond formation is redox-sensitive. The cysteine residues are readily oxidized by several nitric acid (NO) donors and other oxidants to form intramolecular disulfide. Cys-51 can form a disulfide with any other of the cysteine residues with an order of reactivity Cys-9 &gt; Cys-4 &gt; Cys-3. Post-translationally, phosphorylated at Ser-36 by PHK and PKC, phosphorylation prevents interaction with Calmodulin and interrupts several learning- and memory-associated functions.

Its subcellular location is the cytoplasm. The protein resides in the synapse. The protein localises to the cell projection. It localises to the dendritic spine. Functionally, regulates the affinity of calmodulin for calcium. Involved in synaptic plasticity and spatial learning. The polypeptide is Neurogranin (Nrgn) (Mus musculus (Mouse)).